Reading from the N-terminus, the 43-residue chain is Truncated K3L homolog (43 aa).

Belongs to the orthopoxvirus OPG041 family.

This is Truncated K3L homolog (OPG041) from Cynomys gunnisoni (Gunnison's prairie dog).